We begin with the raw amino-acid sequence, 440 residues long: Chromosome partition protein MukF (440 aa).

Positions Leu208 to Ile236 are leucine-zipper.

The protein belongs to the MukF family. As to quaternary structure, interacts, and probably forms a ternary complex, with MukE and MukB via its C-terminal region. The complex formation is stimulated by calcium or magnesium. It is required for an interaction between MukE and MukB.

Its subcellular location is the cytoplasm. It localises to the nucleoid. Involved in chromosome condensation, segregation and cell cycle progression. May participate in facilitating chromosome segregation by condensation DNA from both sides of a centrally located replisome during cell division. Not required for mini-F plasmid partitioning. Probably acts via its interaction with MukB and MukE. Overexpression results in anucleate cells. It has a calcium binding activity. The chain is Chromosome partition protein MukF from Salmonella paratyphi B (strain ATCC BAA-1250 / SPB7).